We begin with the raw amino-acid sequence, 311 residues long: Mitoferrin (311 aa).

Solcar repeat units lie at residues 15–102, 111–195, and 202–302; these read HSIP…MKSF, EHTL…WQQV, and YDPK…FKFM. A run of 6 helical transmembrane segments spans residues 17 to 36, 77 to 96, 112 to 132, 170 to 189, 204 to 223, and 277 to 296; these read IPVH…CVMF, GVNA…FTVY, HTLA…AVMN, SYTT…FMGY, PKSH…AVTT, and GLQA…WSVY.

The protein belongs to the mitochondrial carrier (TC 2.A.29) family.

It is found in the mitochondrion inner membrane. Its function is as follows. Mitochondrial iron transporter that mediates iron uptake. Probably required for heme synthesis of hemoproteins and Fe-S cluster assembly. This Caenorhabditis briggsae protein is Mitoferrin.